A 309-amino-acid chain; its full sequence is MEKVLVFGHKNPDTDAICSAIAYAELKKELGMNAEPVRLGEISGETQFALDSFKVEGPRFVETVANEVDNVILVDHNERQQSANDIESVRVLEVIDHHRIANFETSDPIYYRCEPVGCTATILNKMYKENGVTIRKEVAGLMLSAIISDSLLFKSPTCTEQDVAAARELAEIAGVDADSYGLEMLKAGADLSGKTMEQLISLDAKEFQMGNAKVEIAQVNAVDTNDVLVHQAELEKVITTVVEEKGLDLFLFVVTDILTNDSVGLAIGKATNVVEKAYNVTLQNNTATLKGVVSRKKQIVPVLTETFQA.

Mn(2+) contacts are provided by histidine 9, aspartate 13, aspartate 15, aspartate 75, histidine 97, and aspartate 149.

It belongs to the PPase class C family. Mn(2+) serves as cofactor.

It localises to the cytoplasm. It carries out the reaction diphosphate + H2O = 2 phosphate + H(+). The polypeptide is Probable manganese-dependent inorganic pyrophosphatase (Bacillus mycoides (strain KBAB4) (Bacillus weihenstephanensis)).